The following is a 522-amino-acid chain: Putative zinc finger protein 286B (522 aa).

A disordered region spans residues 1 to 30; that stretch reads METDLAEMPEKGVLSSQDSPHFQEKSTEEG. C2H2-type zinc fingers lie at residues 244–266, 272–294, 299–321, 327–349, 355–377, 383–405, 411–433, 439–461, 467–489, and 495–517; these read HKCN…QRVH, YTCN…QRTH, FECR…QRIH, YECN…QLIH, YECN…QRTH, YKCQ…QRVH, YECS…QRIH, YKCS…QRTH, and FRCN…QRVH.

It belongs to the krueppel C2H2-type zinc-finger protein family.

The protein resides in the nucleus. May be involved in transcriptional regulation. The chain is Putative zinc finger protein 286B (ZNF286B) from Homo sapiens (Human).